The chain runs to 281 residues: MAISKKSSLYLPIFTFITMLLMVVNKVSSSTADANALHFTFNQFSKDQKDLILQGDATTGTDGNLELTRVSSNGSPQGNSVGRALFYAPVHIWESSAVVASFDATFKFLIKSPDSEPADGITFFIANIDSSIPSGSGGRLLGLFPDANIIKNSTTIDFNAAYNADTIVAVELDTYPNTDIGDPNYPHIGIDIKSIRSKKTTRWNIQNGKVGTAHINYNSVGKRLSAIVSYPNSDSATVSYDVDLDNVLPEWVRVGLSATTGLYKETNTILSWSFTSKLKSN.

An N-terminal signal peptide occupies residues 1–29; that stretch reads MAISKKSSLYLPIFTFITMLLMVVNKVSS. Asp119 is a Ca(2+) binding site. Arg139 lines the a carbohydrate pocket. The propeptide at 149–163 is removed in mature form; that stretch reads IIKNSTTIDFNAAYN. Residues Glu171 and Asp173 each coordinate Mn(2+). Asp173, Tyr175, Asn177, and Asp182 together coordinate Ca(2+). An a carbohydrate-binding site is contributed by Tyr175. Asp182 and His187 together coordinate Mn(2+). Residue 262-263 participates in a carbohydrate binding; sequence LY.

This sequence belongs to the leguminous lectin family. Equilibrium between homodimer and homotetramer. The mature chain consists of residues 164-281 followed by residues 30-148. Concanavalin A-like lectins of the Diocleinae subtribe undergo proteolytic processing referred to as circular permutation. The propeptide is split into an N-terminal and a C-terminal part, the gamma and beta chain, respectively. These are then religated in beta-gamma order to form the mature alpha chain. The beta and gamma chains can often be detected in cell extracts.

Its function is as follows. D-mannose-specific lectin. This chain is Lectin CaBo, found in Canavalia bonariensis.